A 334-amino-acid chain; its full sequence is Aspartate carbamoyltransferase catalytic subunit (334 aa).

The carbamoyl phosphate site is built by R71 and T72. K99 is an L-aspartate binding site. Carbamoyl phosphate contacts are provided by R121, H151, and Q154. L-aspartate is bound by residues R184 and R239. G280 and P281 together coordinate carbamoyl phosphate.

The protein belongs to the aspartate/ornithine carbamoyltransferase superfamily. ATCase family. As to quaternary structure, heterododecamer (2C3:3R2) of six catalytic PyrB chains organized as two trimers (C3), and six regulatory PyrI chains organized as three dimers (R2).

The catalysed reaction is carbamoyl phosphate + L-aspartate = N-carbamoyl-L-aspartate + phosphate + H(+). The protein operates within pyrimidine metabolism; UMP biosynthesis via de novo pathway; (S)-dihydroorotate from bicarbonate: step 2/3. Catalyzes the condensation of carbamoyl phosphate and aspartate to form carbamoyl aspartate and inorganic phosphate, the committed step in the de novo pyrimidine nucleotide biosynthesis pathway. This chain is Aspartate carbamoyltransferase catalytic subunit, found in Pseudomonas putida (strain GB-1).